A 348-amino-acid polypeptide reads, in one-letter code: Nicotinate-nucleotide--dimethylbenzimidazole phosphoribosyltransferase (348 aa).

The Proton acceptor role is filled by Glu316.

It belongs to the CobT family.

The catalysed reaction is 5,6-dimethylbenzimidazole + nicotinate beta-D-ribonucleotide = alpha-ribazole 5'-phosphate + nicotinate + H(+). The protein operates within nucleoside biosynthesis; alpha-ribazole biosynthesis; alpha-ribazole from 5,6-dimethylbenzimidazole: step 1/2. Functionally, catalyzes the synthesis of alpha-ribazole-5'-phosphate from nicotinate mononucleotide (NAMN) and 5,6-dimethylbenzimidazole (DMB). The sequence is that of Nicotinate-nucleotide--dimethylbenzimidazole phosphoribosyltransferase from Xanthomonas campestris pv. campestris (strain 8004).